A 492-amino-acid chain; its full sequence is ERAD-associated E3 ubiquitin-protein ligase HRD1A (492 aa).

Residues 1-3 lie on the Cytoplasmic side of the membrane; that stretch reads MIR. A helical membrane pass occupies residues 4-24; that stretch reads LRTYAGLSFMATLAVIYHAFS. At 25–40 the chain is on the lumenal side; sequence SRGQFYPATVYLSTSK. The chain crosses the membrane as a helical span at residues 41-61; it reads ISLVLLLNMCLVLMLSLWHLV. The Cytoplasmic segment spans residues 62–98; the sequence is KFVFLGSLREAEVERLNEQAWRELMEILFAITIFRQD. The helical transmembrane segment at 99 to 119 threads the bilayer; it reads FSSGFLPLVVTLLLIKALHWL. Residues 120-135 are Lumenal-facing; sequence AQKRVEYIETTPSVSK. Residues 136-156 form a helical membrane-spanning segment; it reads LSHFRIVSFMGFLLLVDSLFM. Topologically, residues 157–170 are cytoplasmic; sequence YSSIRHLIQSRQAS. Residues 171 to 191 traverse the membrane as a helical segment; the sequence is VSLFFSFEYMILATTTVAIFV. The Lumenal portion of the chain corresponds to 192–221; it reads KYVFYVTDMLMDGQWEKKPVYTFYLELIRD. The helical transmembrane segment at 222-242 threads the bilayer; that stretch reads LLHLSMYICFFFVIFMNYGVP. Residues 243–492 are Cytoplasmic-facing; that stretch reads LHLLRELYET…KGKSVADAAE (250 aa). Residues 292–330 form an RING-type; atypical zinc finger; that stretch reads CIICREEMTNAKKLICGHLFHVHCLRSWLERQQTCPTCR. 2 disordered regions span residues 339-379 and 470-492; these read ATSA…NSLS and ETRKPESAGEPENKGKSVADAAE. Over residues 351–378 the composition is skewed to low complexity; that stretch reads QGSQQGTSSSGNQGSEISSSAGVSNNSL. Basic and acidic residues predominate over residues 470–486; the sequence is ETRKPESAGEPENKGKS.

Belongs to the HRD1 family.

Its subcellular location is the endoplasmic reticulum membrane. It carries out the reaction S-ubiquitinyl-[E2 ubiquitin-conjugating enzyme]-L-cysteine + [acceptor protein]-L-lysine = [E2 ubiquitin-conjugating enzyme]-L-cysteine + N(6)-ubiquitinyl-[acceptor protein]-L-lysine.. It participates in protein modification; protein ubiquitination. In terms of biological role, probable component of the HRD1 ubiquitin ligase complex that mediates the rapid degradation of misfolded endoplasmic reticulum (ER) proteins, a process called ER-associated degradation (ERAD). Targets the misfolded LRR receptor kinase BRI1. Functions redundantly with HRD3B. The polypeptide is ERAD-associated E3 ubiquitin-protein ligase HRD1A (Arabidopsis thaliana (Mouse-ear cress)).